Consider the following 330-residue polypeptide: Ferredoxin--NADP reductase (330 aa).

Residues glutamate 35, glutamine 43, tyrosine 48, valine 90, phenylalanine 123, aspartate 285, and threonine 326 each contribute to the FAD site.

The protein belongs to the ferredoxin--NADP reductase type 2 family. As to quaternary structure, homodimer. It depends on FAD as a cofactor.

It catalyses the reaction 2 reduced [2Fe-2S]-[ferredoxin] + NADP(+) + H(+) = 2 oxidized [2Fe-2S]-[ferredoxin] + NADPH. The protein is Ferredoxin--NADP reductase of Streptococcus pyogenes serotype M2 (strain MGAS10270).